A 138-amino-acid chain; its full sequence is ATP synthase epsilon chain (138 aa).

Belongs to the ATPase epsilon chain family. F-type ATPases have 2 components, CF(1) - the catalytic core - and CF(0) - the membrane proton channel. CF(1) has five subunits: alpha(3), beta(3), gamma(1), delta(1), epsilon(1). CF(0) has three main subunits: a, b and c.

Its subcellular location is the cell membrane. Its function is as follows. Produces ATP from ADP in the presence of a proton gradient across the membrane. In Streptococcus equinus (Streptococcus bovis), this protein is ATP synthase epsilon chain.